We begin with the raw amino-acid sequence, 912 residues long: Nitrate reductase [NADH] (912 aa).

Residues 1 to 99 (SVEPRQPFGR…PRDEGTADAW (99 aa)) form a disordered region. The span at 13-23 (APATAPTARAP) shows a compositional bias: low complexity. Residues 54 to 68 (AEEDEEDDDEDDEGH) show a composition bias toward acidic residues. Residues 85 to 94 (PSTRDPRDEG) show a composition bias toward basic and acidic residues. Mo-molybdopterin is bound at residue cysteine 186. Positions 535–610 (DKQFTMSEVR…LDTYRIGELI (76 aa)) constitute a Cytochrome b5 heme-binding domain. The heme site is built by histidine 570 and histidine 593. Residues 651 to 764 (REKVPCRLVD…KGPLGHVEYT (114 aa)) enclose the FAD-binding FR-type domain. FAD contacts are provided by residues 703–706 (RAYT), 720–724 (LVKVY), phenylalanine 725, phenylalanine 732, 737–739 (LMT), serine 788, and threonine 791.

Belongs to the nitrate reductase family. In terms of assembly, homodimer. FAD is required as a cofactor. Heme serves as cofactor. Requires Mo-molybdopterin as cofactor.

It catalyses the reaction nitrite + NAD(+) + H2O = nitrate + NADH + H(+). In terms of biological role, nitrate reductase is a key enzyme involved in the first step of nitrate assimilation in plants, fungi and bacteria. This Hordeum vulgare (Barley) protein is Nitrate reductase [NADH].